A 495-amino-acid polypeptide reads, in one-letter code: Glutamyl-tRNA(Gln) amidotransferase subunit A (495 aa).

Catalysis depends on charge relay system residues Lys79 and Ser159. Residue Ser183 is the Acyl-ester intermediate of the active site.

It belongs to the amidase family. GatA subfamily. Heterotrimer of A, B and C subunits.

The catalysed reaction is L-glutamyl-tRNA(Gln) + L-glutamine + ATP + H2O = L-glutaminyl-tRNA(Gln) + L-glutamate + ADP + phosphate + H(+). Functionally, allows the formation of correctly charged Gln-tRNA(Gln) through the transamidation of misacylated Glu-tRNA(Gln) in organisms which lack glutaminyl-tRNA synthetase. The reaction takes place in the presence of glutamine and ATP through an activated gamma-phospho-Glu-tRNA(Gln). The sequence is that of Glutamyl-tRNA(Gln) amidotransferase subunit A from Gluconobacter oxydans (strain 621H) (Gluconobacter suboxydans).